Here is a 445-residue protein sequence, read N- to C-terminus: Exodeoxyribonuclease 7 large subunit (445 aa).

This sequence belongs to the XseA family. In terms of assembly, heterooligomer composed of large and small subunits.

It localises to the cytoplasm. The catalysed reaction is Exonucleolytic cleavage in either 5'- to 3'- or 3'- to 5'-direction to yield nucleoside 5'-phosphates.. Functionally, bidirectionally degrades single-stranded DNA into large acid-insoluble oligonucleotides, which are then degraded further into small acid-soluble oligonucleotides. This Limosilactobacillus reuteri (strain DSM 20016) (Lactobacillus reuteri) protein is Exodeoxyribonuclease 7 large subunit.